A 338-amino-acid chain; its full sequence is Large ribosomal subunit protein uL10 (338 aa).

The segment at 292–338 is disordered; that stretch reads LDDDLKERVSSTASAVEAKEEEAPKEEKEEEKEEEEEAPAAGLGMLF. Over residues 308 to 318 the composition is skewed to basic and acidic residues; that stretch reads EAKEEEAPKEE. Over residues 319 to 329 the composition is skewed to acidic residues; sequence KEEEKEEEEEA.

It belongs to the universal ribosomal protein uL10 family. Part of the 50S ribosomal subunit. Forms part of the ribosomal stalk which helps the ribosome interact with GTP-bound translation factors. Forms a heptameric L10(L12)2(L12)2(L12)2 complex, where L10 forms an elongated spine to which the L12 dimers bind in a sequential fashion.

Functionally, forms part of the ribosomal stalk, playing a central role in the interaction of the ribosome with GTP-bound translation factors. This chain is Large ribosomal subunit protein uL10, found in Methanococcus aeolicus (strain ATCC BAA-1280 / DSM 17508 / OCM 812 / Nankai-3).